The sequence spans 178 residues: Probable inosine/xanthosine triphosphatase (178 aa).

The protein belongs to the YjjX NTPase family. As to quaternary structure, homodimer. Requires Mg(2+) as cofactor. Mn(2+) is required as a cofactor.

The enzyme catalyses XTP + H2O = XDP + phosphate + H(+). It catalyses the reaction ITP + H2O = IDP + phosphate + H(+). Its function is as follows. Phosphatase that hydrolyzes non-canonical purine nucleotides such as XTP and ITP to their respective diphosphate derivatives. Probably excludes non-canonical purines from DNA/RNA precursor pool, thus preventing their incorporation into DNA/RNA and avoiding chromosomal lesions. This Pyrobaculum aerophilum (strain ATCC 51768 / DSM 7523 / JCM 9630 / CIP 104966 / NBRC 100827 / IM2) protein is Probable inosine/xanthosine triphosphatase.